Here is a 383-residue protein sequence, read N- to C-terminus: MSSNPELKYTGKVKVATVQAEPVILDADATIDKAIGFIEEAAKNGAEFLAFPEVWIPGYPYWAWIGDVKWAVSDFIPKYHENSLTLGDDRMRRLQLAARQNNIALVMGYSEKDGASRYLSQVFIDQNGDIVANRRKLKPTHVERTIYGEGNGTDFLTHDFGFGRVGGLNCWEHFQPLSKYMMYSLNEQIHVASWPAMFALTPDVHQLSVEANDTVTRSYAIEGQTFVLASTHVIGKATQDLFAGDDDAKRALLPLGQGWARIYGPDGKSLAEPLPEDAEGLLYAELDLEQIILAKAAADPAGHYSRPDVLSLKIDTRNHTPVQYITADGRTSLNSNSRVENYRLHQLADIEKYENAEAATLPLDAPAPAPAPEQKSGRAKAEA.

The CN hydrolase domain occupies 13 to 288 (VKVATVQAEP…EGLLYAELDL (276 aa)). Glu53 functions as the Proton acceptor in the catalytic mechanism. The active-site Proton donor is the Lys136. Cys170 functions as the Nucleophile in the catalytic mechanism. The interval 359 to 383 (ATLPLDAPAPAPAPEQKSGRAKAEA) is disordered.

This sequence belongs to the carbon-nitrogen hydrolase superfamily. Nitrilase family.

It catalyses the reaction an aliphatic nitrile + 2 H2O = a carboxylate + NH4(+). Functionally, acts on aliphatic nitriles such as acrylonitrile, crotononitrile and glutaronitrile. This chain is Aliphatic nitrilase, found in Rhodococcus rhodochrous.